The sequence spans 141 residues: HTH-type transcriptional repressor NsrR (141 aa).

The HTH rrf2-type domain maps to 2–129; that stretch reads QLTSFTDYAL…DECTIESLLS (128 aa). Positions 28-51 form a DNA-binding region, H-T-H motif; sequence ITEVTDLFGVSRNHMVKVINRLGQ. Positions 91, 96, and 102 each coordinate [2Fe-2S] cluster.

[2Fe-2S] cluster is required as a cofactor.

In terms of biological role, nitric oxide-sensitive repressor of genes involved in protecting the cell against nitrosative stress. May require iron for activity. This chain is HTH-type transcriptional repressor NsrR, found in Vibrio parahaemolyticus serotype O3:K6 (strain RIMD 2210633).